A 255-amino-acid chain; its full sequence is Accessory gland-specific peptide 26Aa (255 aa).

An N-terminal signal peptide occupies residues M1 to A18. The segment at P86–Q110 is disordered. Residues I87–Q110 are compositionally biased toward polar residues. N-linked (GlcNAc...) asparagine glycosylation is found at N88, N95, and N136. 2 disordered regions span residues N177 to A197 and N235 to T255. Positions K183–P192 are enriched in basic residues. Residues K245 to T255 show a composition bias toward polar residues.

It undergoes several cleavages as it is secreted and it is further processed in the recipient female. In terms of tissue distribution, main cells of the accessory glands of males.

Its subcellular location is the secreted. The protein localises to the extracellular space. Its function is as follows. This protein is transferred from male to female's hemolymph during mating, affecting egglaying and behavior after mating. The protein is Accessory gland-specific peptide 26Aa (Acp26Aa) of Drosophila simulans (Fruit fly).